Reading from the N-terminus, the 380-residue chain is 1-deoxy-D-xylulose 5-phosphate reductoisomerase (380 aa).

Residues threonine 10, glycine 11, serine 12, isoleucine 13, glycine 36, arginine 37, asparagine 38, and asparagine 120 each contribute to the NADPH site. Lysine 121 is a 1-deoxy-D-xylulose 5-phosphate binding site. Glutamate 122 lines the NADPH pocket. A Mn(2+)-binding site is contributed by aspartate 146. 1-deoxy-D-xylulose 5-phosphate-binding residues include serine 147, glutamate 148, serine 172, and histidine 195. Residue glutamate 148 participates in Mn(2+) binding. Glycine 201 provides a ligand contact to NADPH. Positions 208, 213, 214, and 217 each coordinate 1-deoxy-D-xylulose 5-phosphate. Glutamate 217 contacts Mn(2+).

It belongs to the DXR family. The cofactor is Mg(2+). It depends on Mn(2+) as a cofactor.

The enzyme catalyses 2-C-methyl-D-erythritol 4-phosphate + NADP(+) = 1-deoxy-D-xylulose 5-phosphate + NADPH + H(+). It functions in the pathway isoprenoid biosynthesis; isopentenyl diphosphate biosynthesis via DXP pathway; isopentenyl diphosphate from 1-deoxy-D-xylulose 5-phosphate: step 1/6. Catalyzes the NADPH-dependent rearrangement and reduction of 1-deoxy-D-xylulose-5-phosphate (DXP) to 2-C-methyl-D-erythritol 4-phosphate (MEP). The chain is 1-deoxy-D-xylulose 5-phosphate reductoisomerase from Listeria welshimeri serovar 6b (strain ATCC 35897 / DSM 20650 / CCUG 15529 / CIP 8149 / NCTC 11857 / SLCC 5334 / V8).